Reading from the N-terminus, the 231-residue chain is Small ribosomal subunit protein uS3 (231 aa).

Positions 39-107 constitute a KH type-2 domain; it reads IRKFIMKTLP…GVSLNIVEIR (69 aa).

Belongs to the universal ribosomal protein uS3 family. As to quaternary structure, part of the 30S ribosomal subunit. Forms a tight complex with proteins S10 and S14.

Its function is as follows. Binds the lower part of the 30S subunit head. Binds mRNA in the 70S ribosome, positioning it for translation. The chain is Small ribosomal subunit protein uS3 from Zymomonas mobilis subsp. mobilis (strain ATCC 31821 / ZM4 / CP4).